We begin with the raw amino-acid sequence, 149 residues long: VapC ribonuclease PF0355 (149 aa).

In terms of domain architecture, PINc spans 8-122 (TFDSLALIKM…ITDDSKRYEP (115 aa)). Residues D10 and D98 each coordinate Mg(2+).

The protein belongs to the PINc/VapC protein family. Requires Mg(2+) as cofactor.

Functionally, toxic component of a type II toxin-antitoxin (TA) system. An RNase. This is VapC ribonuclease PF0355 from Pyrococcus furiosus (strain ATCC 43587 / DSM 3638 / JCM 8422 / Vc1).